Reading from the N-terminus, the 510-residue chain is Peptide transporter imqJ (510 aa).

3 helical membrane passes run 1–21 (MVNQ…AVVA), 31–51 (IIFS…SSLP), and 57–77 (GISL…TGGI). A glycan (N-linked (GlcNAc...) asparagine) is linked at Asn-80. A run of 4 helical transmembrane segments spans residues 116–136 (IFTT…LITI), 143–163 (FSAA…IVLV), 231–251 (IFIL…NFIS), and 269–289 (IDPI…FPFL). A Fe2OG dioxygenase domain is found at 348-468 (PAASEIRLLY…RCSSVFFFKA (121 aa)). Fe cation contacts are provided by His-377 and Asp-379. N-linked (GlcNAc...) asparagine glycosylation occurs at Asn-421. A Fe cation-binding site is contributed by His-439. Arg-459 contributes to the 2-oxoglutarate binding site.

This sequence belongs to the major facilitator superfamily. Proton-dependent oligopeptide transporter (POT/PTR) (TC 2.A.17) family.

It localises to the membrane. Functionally, peptide transporter; part of the gene cluster that mediates the biosynthesis of imizoquins A to D, tripeptide-derived alkaloids that serve a protective role against oxidative stress that are essential for normal germination. This chain is Peptide transporter imqJ, found in Aspergillus flavus (strain ATCC 200026 / FGSC A1120 / IAM 13836 / NRRL 3357 / JCM 12722 / SRRC 167).